A 177-amino-acid chain; its full sequence is MSIEVSNESGIDVSEEELISVARFVIEKMNVNPAAELSMVLLDTSSMADLHMRWMDLPGPTDVMSFPMDELEPGGRPDAPEPGPAMLGDIVLCPEFAAKQAETAGHSLGHELALLTVHGVLHLLGYDHAEPDEEKEMFALQRELLEEWVAHQVEAYHLDRQTERDRRLLDKSRYFDE.

Positions 118, 122, and 128 each coordinate Zn(2+).

The protein belongs to the endoribonuclease YbeY family. Requires Zn(2+) as cofactor.

It localises to the cytoplasm. Its function is as follows. Single strand-specific metallo-endoribonuclease involved in late-stage 70S ribosome quality control and in maturation of the 3' terminus of the 16S rRNA. This chain is Endoribonuclease YbeY, found in Mycobacterium sp. (strain JLS).